The following is a 372-amino-acid chain: NAD(P)H-quinone oxidoreductase subunit 1 (372 aa).

8 consecutive transmembrane segments (helical) span residues 27–47 (AVWM…GVLI), 97–117 (ALFT…YLIV), 128–148 (LGIG…GLLM), 166–186 (AAQS…IAMM), 204–224 (ILGW…IAAL), 254–274 (FALF…MVAI), 308–328 (AVGI…AILL), and 351–371 (VGLV…IAFG).

Belongs to the complex I subunit 1 family. As to quaternary structure, NDH-1 is composed of at least 11 different subunits.

Its subcellular location is the cellular thylakoid membrane. The enzyme catalyses a plastoquinone + NADH + (n+1) H(+)(in) = a plastoquinol + NAD(+) + n H(+)(out). It carries out the reaction a plastoquinone + NADPH + (n+1) H(+)(in) = a plastoquinol + NADP(+) + n H(+)(out). In terms of biological role, NDH-1 shuttles electrons from an unknown electron donor, via FMN and iron-sulfur (Fe-S) centers, to quinones in the respiratory and/or the photosynthetic chain. The immediate electron acceptor for the enzyme in this species is believed to be plastoquinone. Couples the redox reaction to proton translocation, and thus conserves the redox energy in a proton gradient. This chain is NAD(P)H-quinone oxidoreductase subunit 1, found in Cyanothece sp. (strain PCC 7425 / ATCC 29141).